A 746-amino-acid chain; its full sequence is Polyribonucleotide nucleotidyltransferase (746 aa).

2 residues coordinate Mg(2+): aspartate 493 and aspartate 499. The region spanning 560–619 (PRIITLQINPEKIGALIGPGGKTIRSITEATGAQIDIEEDGRVYISTADAAAAQQAVAMV) is the KH domain. An S1 motif domain is found at 629–698 (GDIFLGKVVR…GTGKVSLSRR (70 aa)). Positions 704–746 (ETAEDRRAAGAGRGLRDGGRSSGSERSGDRSPRSDDRPRPRRR) are disordered. Composition is skewed to basic and acidic residues over residues 706 to 722 (AEDR…RDGG) and 729 to 746 (RSGD…PRRR).

This sequence belongs to the polyribonucleotide nucleotidyltransferase family. Mg(2+) is required as a cofactor.

It is found in the cytoplasm. It catalyses the reaction RNA(n+1) + phosphate = RNA(n) + a ribonucleoside 5'-diphosphate. Its function is as follows. Involved in mRNA degradation. Catalyzes the phosphorolysis of single-stranded polyribonucleotides processively in the 3'- to 5'-direction. This chain is Polyribonucleotide nucleotidyltransferase, found in Roseiflexus castenholzii (strain DSM 13941 / HLO8).